The sequence spans 939 residues: Probable importin ECU10_0620 (939 aa).

Positions 23 to 90 (AEAMLMDLEK…VENILDLFLY (68 aa)) constitute an Importin N-terminal domain.

The protein belongs to the importin beta family.

The protein localises to the nucleus. The protein resides in the cytoplasm. Its function is as follows. Active in protein import into the nucleus. The sequence is that of Probable importin ECU10_0620 from Encephalitozoon cuniculi (strain GB-M1) (Microsporidian parasite).